The chain runs to 210 residues: Protein GrpE (210 aa).

Residues 1–42 (MANEERTIPETNVASERPEDPVESQTRAEGGEQIQEAAPETA) form a disordered region.

The protein belongs to the GrpE family. Homodimer.

It is found in the cytoplasm. Functionally, participates actively in the response to hyperosmotic and heat shock by preventing the aggregation of stress-denatured proteins, in association with DnaK and GrpE. It is the nucleotide exchange factor for DnaK and may function as a thermosensor. Unfolded proteins bind initially to DnaJ; upon interaction with the DnaJ-bound protein, DnaK hydrolyzes its bound ATP, resulting in the formation of a stable complex. GrpE releases ADP from DnaK; ATP binding to DnaK triggers the release of the substrate protein, thus completing the reaction cycle. Several rounds of ATP-dependent interactions between DnaJ, DnaK and GrpE are required for fully efficient folding. This Nitrosococcus oceani (strain ATCC 19707 / BCRC 17464 / JCM 30415 / NCIMB 11848 / C-107) protein is Protein GrpE.